A 225-amino-acid polypeptide reads, in one-letter code: Urease accessory protein UreF (225 aa).

It belongs to the UreF family. UreD, UreF and UreG form a complex that acts as a GTP-hydrolysis-dependent molecular chaperone, activating the urease apoprotein by helping to assemble the nickel containing metallocenter of UreC. The UreE protein probably delivers the nickel.

Its subcellular location is the cytoplasm. Functionally, required for maturation of urease via the functional incorporation of the urease nickel metallocenter. The polypeptide is Urease accessory protein UreF (Thermosynechococcus vestitus (strain NIES-2133 / IAM M-273 / BP-1)).